Reading from the N-terminus, the 442-residue chain is UDP-N-acetylmuramate--L-alanine ligase (442 aa).

An ATP-binding site is contributed by G110–S116.

Belongs to the MurCDEF family.

Its subcellular location is the cytoplasm. It catalyses the reaction UDP-N-acetyl-alpha-D-muramate + L-alanine + ATP = UDP-N-acetyl-alpha-D-muramoyl-L-alanine + ADP + phosphate + H(+). It functions in the pathway cell wall biogenesis; peptidoglycan biosynthesis. Its function is as follows. Cell wall formation. This Streptococcus thermophilus (strain ATCC BAA-491 / LMD-9) protein is UDP-N-acetylmuramate--L-alanine ligase.